We begin with the raw amino-acid sequence, 399 residues long: Acyl-homoserine-lactone synthase LuxM (399 aa).

Belongs to the LuxM / VanM family.

The enzyme catalyses a fatty acyl-[ACP] + S-adenosyl-L-methionine = an N-acyl-L-homoserine lactone + S-methyl-5'-thioadenosine + holo-[ACP] + H(+). In terms of biological role, required for the synthesis of an autoinducer molecule beta-hydroxybutyryl homoserine lactone, which binds to LuxN and thus acts in bioluminescence regulation. The sequence is that of Acyl-homoserine-lactone synthase LuxM (luxM) from Vibrio harveyi (Beneckea harveyi).